An 86-amino-acid chain; its full sequence is uncharacterized protein (86 aa).

Residues 63–85 (VGGRSPSIQNSFFFFFFFFFFFF) form a helical membrane-spanning segment.

It localises to the membrane. This is an uncharacterized protein from Dictyostelium discoideum (Social amoeba).